A 24-amino-acid chain; its full sequence is Pseudin-2 (24 aa).

Expressed by the skin glands.

The protein resides in the secreted. Its function is as follows. Antimicrobial peptide with activity against fungus (C.albicans) and Gram-positive and Gram-negative bacteria (S.aureus and E.coli). Also has low hemolytic activity against human erythrocytes. This chain is Pseudin-2, found in Pseudis paradoxa (Paradoxical frog).